The following is a 138-amino-acid chain: Small ribosomal subunit protein uS8c (138 aa).

This sequence belongs to the universal ribosomal protein uS8 family. Part of the 30S ribosomal subunit.

The protein localises to the plastid. The protein resides in the chloroplast. In terms of biological role, one of the primary rRNA binding proteins, it binds directly to 16S rRNA central domain where it helps coordinate assembly of the platform of the 30S subunit. The protein is Small ribosomal subunit protein uS8c (rps8) of Oenothera elata subsp. hookeri (Hooker's evening primrose).